The sequence spans 219 residues: Segregation and condensation protein B (219 aa).

Residues 193–219 (SLFAGGEEPSAEAADGGAGESTHGEEE) are disordered. The segment covering 196 to 207 (AGGEEPSAEAAD) has biased composition (low complexity).

The protein belongs to the ScpB family. In terms of assembly, homodimer. Homodimerization may be required to stabilize the binding of ScpA to the Smc head domains. Component of a cohesin-like complex composed of ScpA, ScpB and the Smc homodimer, in which ScpA and ScpB bind to the head domain of Smc. The presence of the three proteins is required for the association of the complex with DNA.

The protein localises to the cytoplasm. In terms of biological role, participates in chromosomal partition during cell division. May act via the formation of a condensin-like complex containing Smc and ScpA that pull DNA away from mid-cell into both cell halves. This is Segregation and condensation protein B from Symbiobacterium thermophilum (strain DSM 24528 / JCM 14929 / IAM 14863 / T).